The following is a 206-amino-acid chain: tRNA (guanine-N(7)-)-methyltransferase (206 aa).

S-adenosyl-L-methionine contacts are provided by E37, E62, D89, and D112. The active site involves D112. Substrate-binding residues include K116 and D148.

It belongs to the class I-like SAM-binding methyltransferase superfamily. TrmB family.

It catalyses the reaction guanosine(46) in tRNA + S-adenosyl-L-methionine = N(7)-methylguanosine(46) in tRNA + S-adenosyl-L-homocysteine. It participates in tRNA modification; N(7)-methylguanine-tRNA biosynthesis. In terms of biological role, catalyzes the formation of N(7)-methylguanine at position 46 (m7G46) in tRNA. The protein is tRNA (guanine-N(7)-)-methyltransferase of Myxococcus xanthus (strain DK1622).